Reading from the N-terminus, the 746-residue chain is Lysine-specific histone demethylase 1 homolog 2 (746 aa).

Residues 1 to 26 (MNSPASDETAPRRNRRKVSRKNYDEN) are disordered. Positions 51–152 (EKETETEALI…FGVSPLFAPY (102 aa)) constitute an SWIRM domain. Glu-189, Arg-191, Arg-197, and Glu-569 together coordinate FAD.

This sequence belongs to the flavin monoamine oxidase family. FAD is required as a cofactor. As to expression, expressed in the shoot and root apical regions of young seedlings. Expressed in inflorescences.

In terms of biological role, probable histone demethylase that reduces the levels of histone H3 'Lys-4' methylation in chromatin of the floral repressor FLOWERING LOCUS C (FLC) and the sporophytically silenced floral repressor FWA. Seems to act in partial redundancy with FLOWERING LOCUS D (FLD) to repress FLC expression. Required for cytosine methylation of FWA. Controls primary seed dormancy by regulating DOG1 and abscisic acid signaling-related genes. In Arabidopsis thaliana (Mouse-ear cress), this protein is Lysine-specific histone demethylase 1 homolog 2.